The primary structure comprises 149 residues: MSNPIAIDIHKILQLLPHRYPFLLVDRVLEITPRETITALKNVTMNEPFFQGHFPDFPVMPGVLIIEALAQTAALLTFSEERAEDAIYYFAGIDGARFKKPVLPGDQLIMTARLERGRAGIYKFAVQATVDGEIAAEANITCAVRSKGA.

The active site involves histidine 53.

This sequence belongs to the thioester dehydratase family. FabZ subfamily.

Its subcellular location is the cytoplasm. The enzyme catalyses a (3R)-hydroxyacyl-[ACP] = a (2E)-enoyl-[ACP] + H2O. In terms of biological role, involved in unsaturated fatty acids biosynthesis. Catalyzes the dehydration of short chain beta-hydroxyacyl-ACPs and long chain saturated and unsaturated beta-hydroxyacyl-ACPs. This Polynucleobacter asymbioticus (strain DSM 18221 / CIP 109841 / QLW-P1DMWA-1) (Polynucleobacter necessarius subsp. asymbioticus) protein is 3-hydroxyacyl-[acyl-carrier-protein] dehydratase FabZ.